Reading from the N-terminus, the 306-residue chain is Uracil phosphoribosyltransferase homolog (306 aa).

2 disordered regions span residues 1 to 28 (MATELRCPDSMPCHNQQVNSASTQNPEP) and 58 to 87 (SSVPAELDPQASGGATFNSENNGGTGNYDA). 2 stretches are compositionally biased toward polar residues: residues 13-28 (CHNQQVNSASTQNPEP) and 70-79 (GGATFNSENN). GTP is bound by residues arginine 130, arginine 139, and 173 to 176 (EKGN). Arginine 183 is a 5-phospho-alpha-D-ribose 1-diphosphate binding site. GTP-binding residues include arginine 200 and arginine 229. Residue 235–243 (YPILSTGNT) coordinates 5-phospho-alpha-D-ribose 1-diphosphate. Residue 296 to 298 (THF) participates in uracil binding.

It belongs to the UPRTase family.

It localises to the cytoplasm. Its subcellular location is the nucleus. This is Uracil phosphoribosyltransferase homolog (UPRT) from Bos taurus (Bovine).